We begin with the raw amino-acid sequence, 248 residues long: Lysine-rich arabinogalactan protein 19 (248 aa).

Residues 1–24 (MESNSIIWSLLLASALISSFSVNA) form the signal peptide. The span at 25 to 37 (QGPAASPVTSTTT) shows a compositional bias: low complexity. The segment at 25–221 (QGPAASPVTS…APSPNTNGGN (197 aa)) is disordered. Composition is skewed to pro residues over residues 38-57 (APPP…PTTT), 67-86 (PASP…PAPK), and 94-171 (ATPP…PAPA). The segment covering 173 to 187 (TKHKRKHKHKRHHHA) has biased composition (basic residues). Residues 189-203 (APAPIPPSPPSPPVL) show a composition bias toward pro residues. The GPI-anchor amidated serine moiety is linked to residue Ser-196. Positions 197-248 (PPSPPVLTDPQDTAPAPSPNTNGGNALNQLKGRAVMWLNTGLVILFLLAMTA) are cleaved as a propeptide — removed in mature form.

The protein belongs to the lysine-rich AGP family. O-glycosylated on the hydroxyproline residues. As to expression, strongly expressed in stems, moderately expressed in flowers and roots and weakly expressed in young leaves.

The protein resides in the cell membrane. In terms of biological role, proteoglycan that seems to be implicated in diverse developmental roles such as differentiation, cell-cell recognition, embryogenesis and programmed cell death. The chain is Lysine-rich arabinogalactan protein 19 (AGP19) from Arabidopsis thaliana (Mouse-ear cress).